Here is a 532-residue protein sequence, read N- to C-terminus: D-arabinono-1,4-lactone oxidase (532 aa).

The FAD-binding PCMH-type domain maps to 25 to 199 (YSARPRLYFQ…VRATIRVVPA (175 aa)). Residue His-62 is modified to Pros-8alpha-FAD histidine.

This sequence belongs to the oxygen-dependent FAD-linked oxidoreductase family. FAD is required as a cofactor.

It localises to the mitochondrion membrane. The enzyme catalyses D-arabinono-1,4-lactone + O2 = dehydro-D-arabinono-1,4-lactone + H2O2 + H(+). The protein operates within cofactor biosynthesis; D-erythroascorbate biosynthesis; dehydro-D-arabinono-1,4-lactone from D-arabinose: step 2/2. This Eremothecium gossypii (strain ATCC 10895 / CBS 109.51 / FGSC 9923 / NRRL Y-1056) (Yeast) protein is D-arabinono-1,4-lactone oxidase (ALO1).